The sequence spans 229 residues: Large ribosomal subunit protein uL1 (229 aa).

It belongs to the universal ribosomal protein uL1 family. In terms of assembly, part of the 50S ribosomal subunit.

Binds directly to 23S rRNA. The L1 stalk is quite mobile in the ribosome, and is involved in E site tRNA release. Functionally, protein L1 is also a translational repressor protein, it controls the translation of the L11 operon by binding to its mRNA. In Phenylobacterium zucineum (strain HLK1), this protein is Large ribosomal subunit protein uL1.